Here is a 769-residue protein sequence, read N- to C-terminus: DNA gyrase subunit B (769 aa).

Positions 414-528 (SEIYLVEGDS…NGHIYLAQPP (115 aa)) constitute a Toprim domain. Glutamate 420, aspartate 493, and aspartate 495 together coordinate Mg(2+).

It belongs to the type II topoisomerase GyrB family. As to quaternary structure, heterotetramer, composed of two GyrA and two GyrB chains. In the heterotetramer, GyrA contains the active site tyrosine that forms a transient covalent intermediate with DNA, while GyrB binds cofactors and catalyzes ATP hydrolysis. Requires Mg(2+) as cofactor. It depends on Mn(2+) as a cofactor. Ca(2+) serves as cofactor.

It is found in the cytoplasm. It catalyses the reaction ATP-dependent breakage, passage and rejoining of double-stranded DNA.. A type II topoisomerase that negatively supercoils closed circular double-stranded (ds) DNA in an ATP-dependent manner to modulate DNA topology and maintain chromosomes in an underwound state. Negative supercoiling favors strand separation, and DNA replication, transcription, recombination and repair, all of which involve strand separation. Also able to catalyze the interconversion of other topological isomers of dsDNA rings, including catenanes and knotted rings. Type II topoisomerases break and join 2 DNA strands simultaneously in an ATP-dependent manner. The protein is DNA gyrase subunit B of Campylobacter jejuni subsp. jejuni serotype O:2 (strain ATCC 700819 / NCTC 11168).